A 197-amino-acid polypeptide reads, in one-letter code: Xanthine phosphoribosyltransferase (197 aa).

The xanthine site is built by Leu20 and Asn27. 128–132 (ANGQA) contacts 5-phospho-alpha-D-ribose 1-diphosphate. A xanthine-binding site is contributed by Lys156.

The protein belongs to the purine/pyrimidine phosphoribosyltransferase family. Xpt subfamily. Homodimer.

The protein resides in the cytoplasm. The catalysed reaction is XMP + diphosphate = xanthine + 5-phospho-alpha-D-ribose 1-diphosphate. It functions in the pathway purine metabolism; XMP biosynthesis via salvage pathway; XMP from xanthine: step 1/1. Its function is as follows. Converts the preformed base xanthine, a product of nucleic acid breakdown, to xanthosine 5'-monophosphate (XMP), so it can be reused for RNA or DNA synthesis. The protein is Xanthine phosphoribosyltransferase of Bacillus anthracis (strain A0248).